The following is a 238-amino-acid chain: Envelope glycoprotein G (238 aa).

A signal peptide spans 1–24 (MSQGAMRAVVPIIPFLLVLVGVSG). The Virion surface segment spans residues 25–189 (VPTNVSSTTQ…SFLTASPALD (165 aa)). Asn28 and Asn49 each carry an N-linked (GlcNAc...) asparagine; by host glycan. 2 stretches are compositionally biased toward polar residues: residues 28 to 42 (NVSS…TTGR) and 49 to 68 (NMTQ…TTPD). The interval 28 to 171 (NVSSTTQPQL…LTSKGRPLVP (144 aa)) is disordered. Positions 78–88 (LEEEEEEEGAG) are enriched in acidic residues. Residues 89–100 (DGEHLEGGDGTR) show a composition bias toward basic and acidic residues. Residues 190–210 (TLFVVSTVIHTLSFLCIGAMA) form a helical membrane-spanning segment. The Intravirion segment spans residues 211 to 238 (THLCGGWSRRGRRTHPSVRYVCLPSERG).

The protein belongs to the alphaherpesvirinae glycoprotein G family.

It localises to the virion membrane. Functionally, chemokine-binding protein that inhibits neutrophils' chemotaxis. This is Envelope glycoprotein G (gG) from Human herpesvirus 1 (strain 17) (HHV-1).